Here is a 378-residue protein sequence, read N- to C-terminus: UDP-4-amino-4-deoxy-L-arabinose--oxoglutarate aminotransferase (378 aa).

N6-(pyridoxal phosphate)lysine is present on Lys-182.

It belongs to the DegT/DnrJ/EryC1 family. ArnB subfamily. In terms of assembly, homodimer. The cofactor is pyridoxal 5'-phosphate.

It carries out the reaction UDP-4-amino-4-deoxy-beta-L-arabinose + 2-oxoglutarate = UDP-beta-L-threo-pentopyranos-4-ulose + L-glutamate. Its pathway is nucleotide-sugar biosynthesis; UDP-4-deoxy-4-formamido-beta-L-arabinose biosynthesis; UDP-4-deoxy-4-formamido-beta-L-arabinose from UDP-alpha-D-glucuronate: step 2/3. The protein operates within bacterial outer membrane biogenesis; lipopolysaccharide biosynthesis. Catalyzes the conversion of UDP-4-keto-arabinose (UDP-Ara4O) to UDP-4-amino-4-deoxy-L-arabinose (UDP-L-Ara4N). The modified arabinose is attached to lipid A and is required for resistance to polymyxin and cationic antimicrobial peptides. The chain is UDP-4-amino-4-deoxy-L-arabinose--oxoglutarate aminotransferase from Aeromonas hydrophila subsp. hydrophila (strain ATCC 7966 / DSM 30187 / BCRC 13018 / CCUG 14551 / JCM 1027 / KCTC 2358 / NCIMB 9240 / NCTC 8049).